The primary structure comprises 777 residues: Endonuclease MutS2 (777 aa).

328–335 (GPNTGGKT) provides a ligand contact to ATP. The Smr domain occupies 702-777 (LDIRGMNTLE…GDGATEVYLK (76 aa)).

Belongs to the DNA mismatch repair MutS family. MutS2 subfamily. Homodimer. Binds to stalled ribosomes, contacting rRNA.

Its function is as follows. Endonuclease that is involved in the suppression of homologous recombination and thus may have a key role in the control of bacterial genetic diversity. In terms of biological role, acts as a ribosome collision sensor, splitting the ribosome into its 2 subunits. Detects stalled/collided 70S ribosomes which it binds and splits by an ATP-hydrolysis driven conformational change. Acts upstream of the ribosome quality control system (RQC), a ribosome-associated complex that mediates the extraction of incompletely synthesized nascent chains from stalled ribosomes and their subsequent degradation. Probably generates substrates for RQC. The protein is Endonuclease MutS2 of Carboxydothermus hydrogenoformans (strain ATCC BAA-161 / DSM 6008 / Z-2901).